Reading from the N-terminus, the 183-residue chain is Apo-citrate lyase phosphoribosyl-dephospho-CoA transferase (183 aa).

This sequence belongs to the CitX family.

The catalysed reaction is apo-[citrate lyase ACP] + 2'-(5''-triphospho-alpha-D-ribosyl)-3'-dephospho-CoA = holo-[citrate lyase ACP] + diphosphate. In terms of biological role, transfers 2-(5''-triphosphoribosyl)-3'-dephosphocoenzyme-A on a serine residue to the apo-acyl carrier protein (gamma chain) of the citrate lyase to yield holo-acyl carrier protein. The sequence is that of Apo-citrate lyase phosphoribosyl-dephospho-CoA transferase from Escherichia coli O139:H28 (strain E24377A / ETEC).